Consider the following 230-residue polypeptide: MYDIKKWRHIFKLDPAKHISDDDLDAICMSQTDAIMIGGTDDVTEDNVIHLMSRVRRYPLPLVLEISNIESVMPGFDFYFVPTVLNSTDVVFHNGTLLEALKTYGHSIDFEEVIFEGYVVCNADSKVAKHTKANTDLTTEDLEAYAQMVNHMYRLPVMYIEYSGIYGDVSKVQAVSEHLTETQLFYGGGISSEQQATEMAAIADTIIVGDIIYKDIKKALKTVKIKESSK.

Lys-12 is a sn-glycerol 1-phosphate binding site. Positions 14 and 40 each coordinate Mg(2+). Residues Tyr-159–Gly-164, Gly-189, and Gly-209–Asp-210 contribute to the sn-glycerol 1-phosphate site.

The protein belongs to the GGGP/HepGP synthase family. Group I subfamily. Homodimer. It depends on Mg(2+) as a cofactor.

The catalysed reaction is sn-glycerol 1-phosphate + all-trans-heptaprenyl diphosphate = 3-heptaprenyl-sn-glycero-1-phosphate + diphosphate. It functions in the pathway membrane lipid metabolism; glycerophospholipid metabolism. Functionally, prenyltransferase that catalyzes in vivo the transfer of the heptaprenyl moiety of heptaprenyl pyrophosphate (HepPP; 35 carbon atoms) to the C3 hydroxyl of sn-glycerol-1-phosphate (G1P), producing heptaprenylglyceryl phosphate (HepGP). This reaction is an ether-bond-formation step in the biosynthesis of archaea-type G1P-based membrane lipids found in Bacillales. To a much lesser extent, is also able to use geranylgeranyl diphosphate (GGPP; C20) as the prenyl donor. The chain is Heptaprenylglyceryl phosphate synthase from Staphylococcus aureus (strain NCTC 8325 / PS 47).